A 95-amino-acid chain; its full sequence is Sec-independent protein translocase protein TatA (95 aa).

Residues 1-21 (MGSMSVWHWVIVAVVVMLLFG) form a helical membrane-spanning segment. The segment at 42 to 95 (GMADDETQPNTATSVPPVGPNDPVRTLPHQGAPGTAPQPPHVQPHVPAGDHKAV) is disordered.

The protein belongs to the TatA/E family. The Tat system comprises two distinct complexes: a TatABC complex, containing multiple copies of TatA, TatB and TatC subunits, and a separate TatA complex, containing only TatA subunits. Substrates initially bind to the TatABC complex, which probably triggers association of the separate TatA complex to form the active translocon.

The protein localises to the cell inner membrane. In terms of biological role, part of the twin-arginine translocation (Tat) system that transports large folded proteins containing a characteristic twin-arginine motif in their signal peptide across membranes. TatA could form the protein-conducting channel of the Tat system. This is Sec-independent protein translocase protein TatA from Methylorubrum extorquens (strain PA1) (Methylobacterium extorquens).